A 152-amino-acid chain; its full sequence is Transcriptional repressor NrdR (152 aa).

A zinc finger spans residues 3 to 34; sequence CPFCNHGELKVIDSRNAPEANAIKRRRECLKC. The ATP-cone domain occupies 48–138; that stretch reads LQVLKRDGRY…VYRRFKDVGE (91 aa).

This sequence belongs to the NrdR family. Zn(2+) is required as a cofactor.

Negatively regulates transcription of bacterial ribonucleotide reductase nrd genes and operons by binding to NrdR-boxes. The chain is Transcriptional repressor NrdR from Chlamydia pneumoniae (Chlamydophila pneumoniae).